The chain runs to 294 residues: ATP synthase gamma chain (294 aa).

The protein belongs to the ATPase gamma chain family. As to quaternary structure, F-type ATPases have 2 components, CF(1) - the catalytic core - and CF(0) - the membrane proton channel. CF(1) has five subunits: alpha(3), beta(3), gamma(1), delta(1), epsilon(1). CF(0) has three main subunits: a, b and c.

The protein localises to the cell inner membrane. Its function is as follows. Produces ATP from ADP in the presence of a proton gradient across the membrane. The gamma chain is believed to be important in regulating ATPase activity and the flow of protons through the CF(0) complex. This Rhizobium rhizogenes (strain K84 / ATCC BAA-868) (Agrobacterium radiobacter) protein is ATP synthase gamma chain.